The following is a 371-amino-acid chain: Glycerol-3-phosphate dehydrogenase [NAD(+)] 2 (371 aa).

NAD(+)-binding positions include 18 to 23 (GSGNWG), Phe50, and Phe106. Position 129 (Lys129) interacts with substrate. Residue Ala162 coordinates NAD(+). Lys222 serves as the catalytic Proton acceptor. 2 residues coordinate NAD(+): Arg294 and Gln323. Position 294 to 295 (294 to 295 (RN)) interacts with substrate.

Belongs to the NAD-dependent glycerol-3-phosphate dehydrogenase family. Interacts with human CFH/complement factor H; the interaction is direct and enables the pathogen to evade the host innate immune system. Interacts with human CFHR1/complement factor H-related protein 1; the interaction is direct. Interacts with human PLG/plasminogen; the interaction is direct and provides active plasmin on the surface of fungal cells.

The protein localises to the secreted. The protein resides in the cell wall. It is found in the cytoplasm. Its subcellular location is the peroxisome. It carries out the reaction sn-glycerol 3-phosphate + NAD(+) = dihydroxyacetone phosphate + NADH + H(+). May catalyze the production and accumulation of glycerol during hyperosmotic stress conditions. Glycerol acts as a osmoregulator that prevents loss of water and turgor of the cells. Mediates evasion of the host innate immune system by binding inhibitory components of the host alternative complement system, in a manner dependent on estrogen-induced inhibition of EBP1. This is Glycerol-3-phosphate dehydrogenase [NAD(+)] 2 from Candida albicans (strain SC5314 / ATCC MYA-2876) (Yeast).